Consider the following 150-residue polypeptide: uncharacterized protein (150 aa).

This is an uncharacterized protein from Escherichia coli O157:H7.